The primary structure comprises 590 residues: Aspartate--tRNA(Asp/Asn) ligase (590 aa).

Glu169 contacts L-aspartate. The aspartate stretch occupies residues 193–196 (QLFK). Position 215 (Arg215) interacts with L-aspartate. ATP contacts are provided by residues 215 to 217 (RDE) and Gln224. His447 provides a ligand contact to L-aspartate. Residue Glu479 coordinates ATP. Arg486 is an L-aspartate binding site. Position 531–534 (531–534 (GWDR)) interacts with ATP. The interval 556–590 (GGFDPLTAAPAPITPEQRKEAGVDARPQQDLPPQS) is disordered.

This sequence belongs to the class-II aminoacyl-tRNA synthetase family. Type 1 subfamily. In terms of assembly, homodimer.

The protein resides in the cytoplasm. The enzyme catalyses tRNA(Asx) + L-aspartate + ATP = L-aspartyl-tRNA(Asx) + AMP + diphosphate. Functionally, aspartyl-tRNA synthetase with relaxed tRNA specificity since it is able to aspartylate not only its cognate tRNA(Asp) but also tRNA(Asn). Reaction proceeds in two steps: L-aspartate is first activated by ATP to form Asp-AMP and then transferred to the acceptor end of tRNA(Asp/Asn). The chain is Aspartate--tRNA(Asp/Asn) ligase from Nocardioides sp. (strain ATCC BAA-499 / JS614).